A 336-amino-acid chain; its full sequence is DNA repair protein XRCC4 (336 aa).

The interval 1–213 (MERKISRIHL…EREKDIKQEG (213 aa)) is interaction with IFFO1. Residue Ser53 is modified to Phosphoserine; by PRKDC. Coiled coils occupy residues 131 to 165 (LDTIAENQAKNEHLQKENERLLRDWNDVQGRFEKC) and 184 to 212 (LNEKKTKIRSLHNKLLNAAQEREKDIKQE). The segment at 180–213 (FILVLNEKKTKIRSLHNKLLNAAQEREKDIKQEG) is interaction with LIG4. Ser193 bears the Phosphoserine; by PRKDC mark. A Glycyl lysine isopeptide (Lys-Gly) (interchain with G-Cter in SUMO) cross-link involves residue Lys210. Positions 212 to 249 (EGETAICSEMTADRDPVYDESTDEESENQTDLSGLASA) are disordered. At Tyr229 the chain carries Phosphotyrosine. The segment covering 229 to 239 (YDESTDEESEN) has biased composition (acidic residues). Ser232 carries the post-translational modification Phosphoserine. Position 233 is a phosphothreonine; by CK2 (Thr233). Ser237 and Ser256 each carry phosphoserine. The residue at position 260 (Ser260) is a Phosphoserine; by PRKDC. Residues 264 to 336 (TDIAPSRKRR…SSPEDLFDEI (73 aa)) form a disordered region. The Nuclear localization signal motif lies at 270–275 (RKRRQR). Residue Lys296 forms a Glycyl lysine isopeptide (Lys-Gly) (interchain with G-Cter in ubiquitin) linkage. 4 positions are modified to phosphoserine; by PRKDC: Ser303, Ser304, Ser315, and Ser320. Polar residues predominate over residues 317–329 (ENMSLETLRNSSP). Thr323 is subject to Phosphothreonine; by PRKDC. A phosphoserine; by PRKDC mark is found at Ser327 and Ser328.

The protein belongs to the XRCC4-XLF family. XRCC4 subfamily. Homodimer and homotetramer in solution. Interacts with NHEJ1/XLF; the interaction is direct and is mediated via a head-to-head interaction between N-terminal head regions. Interacts with LIG4; the LIG4-XRCC4 subcomplex has a 1:2 stoichiometry and XRCC4 is required for LIG4 stability. Component of the core long-range non-homologous end joining (NHEJ) complex (also named DNA-PK complex) composed of PRKDC, LIG4, XRCC4, XRCC6/Ku70, XRCC5/Ku86 and NHEJ1/XLF. Additional component of the NHEJ complex includes PAXX. Following autophosphorylation, PRKDC dissociates from DNA, leading to formation of the short-range NHEJ complex, composed of LIG4, XRCC4, XRCC6/Ku70, XRCC5/Ku86 and NHEJ1/XLF. Interacts with PRKDC; the interaction is direct. Interacts with XRCC6/Ku70; the interaction is direct. Interacts with APTX and APLF. Forms a heterotetramer with IFFO1; the interaction involves LIG4-free XRCC4 and leads to the relocalization of IFFO1 to the sites of DNA damage. Interacts with PNKP; mainly interacts with PNKP when phosphorylated at Thr-233, but is also able to interact at much lower level with PNKP when not unphosphorylated. Interacts with POLL (DNA polymerase lambda). In terms of assembly, interacts with XKR4; interacts with the processed form of XKR4, which is cleaved by caspase. In terms of processing, phosphorylated by PRKDC at the C-terminus in response to DNA damage; Ser-260 and Ser-320 constitute the main phosphorylation sites. Phosphorylations by PRKDC at the C-terminus of XRCC4 and NHEJ1/XLF are highly redundant and regulate ability of the XRCC4-NHEJ1/XLF subcomplex to bridge DNA. Phosphorylation by PRKDC does not prevent interaction with NHEJ1/XLF but disrupts ability to bridge DNA and promotes detachment from DNA. Phosphorylation at Ser-327 and Ser-328 by PRKDC promotes recognition by the SCF(FBXW7) complex and subsequent ubiquitination via 'Lys-63'-linked ubiquitin. Phosphorylation at Thr-233 by CK2 promotes interaction with PNKP; regulating PNKP activity and localization to DNA damage sites. Phosphorylation by CK2 promotes interaction with APTX. Post-translationally, ubiquitinated at Lys-296 by the SCF(FBXW7) complex via 'Lys-63'-linked ubiquitination, thereby promoting double-strand break repair: the SCF(FBXW7) complex specifically recognizes XRCC4 when phosphorylated at Ser-327 and Ser-328 by PRKDC, and 'Lys-63'-linked ubiquitination facilitates DNA non-homologous end joining (NHEJ) by enhancing association with XRCC5/Ku80 and XRCC6/Ku70. Monoubiquitinated. Undergoes proteolytic processing by caspase-3 (CASP3). This generates the protein XRCC4, C-terminus (XRCC4/C), which translocates to the cytoplasm and activates phospholipid scramblase activity of XKR4, thereby promoting phosphatidylserine exposure on apoptotic cell surface. In terms of tissue distribution, widely expressed.

Its subcellular location is the nucleus. The protein resides in the chromosome. It is found in the cytoplasm. DNA non-homologous end joining (NHEJ) core factor, required for double-strand break repair and V(D)J recombination. Acts as a scaffold protein that regulates recruitment of other proteins to DNA double-strand breaks (DSBs). Associates with NHEJ1/XLF to form alternating helical filaments that bridge DNA and act like a bandage, holding together the broken DNA until it is repaired. The XRCC4-NHEJ1/XLF subcomplex binds to the DNA fragments of a DSB in a highly diffusive manner and robustly bridges two independent DNA molecules, holding the broken DNA fragments in close proximity to one other. The mobility of the bridges ensures that the ends remain accessible for further processing by other repair factors. Plays a key role in the NHEJ ligation step of the broken DNA during DSB repair via direct interaction with DNA ligase IV (LIG4): the LIG4-XRCC4 subcomplex reseals the DNA breaks after the gap filling is completed. XRCC4 stabilizes LIG4, regulates its subcellular localization and enhances LIG4's joining activity. Binding of the LIG4-XRCC4 subcomplex to DNA ends is dependent on the assembly of the DNA-dependent protein kinase complex DNA-PK to these DNA ends. Promotes displacement of PNKP from processed strand break termini. Its function is as follows. Acts as an activator of the phospholipid scramblase activity of XKR4. This form, which is generated upon caspase-3 (CASP3) cleavage, translocates into the cytoplasm and interacts with XKR4, thereby promoting phosphatidylserine scramblase activity of XKR4 and leading to phosphatidylserine exposure on apoptotic cell surface. This chain is DNA repair protein XRCC4, found in Homo sapiens (Human).